A 170-amino-acid chain; its full sequence is Urease accessory protein UreE (170 aa).

The segment at 144–170 (GGHSHDDHDHHHGHHEHDHEHHHHHHD) is disordered. Positions 146–162 (HSHDDHDHHHGHHEHDH) are enriched in basic and acidic residues.

This sequence belongs to the UreE family.

It is found in the cytoplasm. Functionally, involved in urease metallocenter assembly. Binds nickel. Probably functions as a nickel donor during metallocenter assembly. The polypeptide is Urease accessory protein UreE (Brucella anthropi (strain ATCC 49188 / DSM 6882 / CCUG 24695 / JCM 21032 / LMG 3331 / NBRC 15819 / NCTC 12168 / Alc 37) (Ochrobactrum anthropi)).